A 943-amino-acid polypeptide reads, in one-letter code: Serine/threonine-protein kinase ATG1 (943 aa).

The region spanning 22 to 327 (FVIDKEIGKG…FEDFFHHPVI (306 aa)) is the Protein kinase domain. Residues 28 to 36 (IGKGSFAQV) and lysine 51 contribute to the ATP site. The active-site Proton acceptor is the aspartate 165. Disordered stretches follow at residues 334-468 (LVED…LTDE), 503-561 (QQGQ…SPGA), 774-800 (LPEE…GGQA), 858-888 (HLPK…SDDK), and 914-943 (AASK…SVPT). Positions 338–352 (DIPKPEKPVLAETKS) are enriched in basic and acidic residues. A compositionally biased stretch (polar residues) spans 517-529 (ATQQGHPTSTTGA). Positions 542–554 (RNDHYRKASHDKT) are enriched in basic and acidic residues. The span at 919–928 (QQQQQQQQVV) shows a compositional bias: low complexity.

The protein belongs to the protein kinase superfamily. Ser/Thr protein kinase family. APG1/unc-51/ULK1 subfamily. As to quaternary structure, homodimer. Forms a ternary complex with ATG13 and ATG17.

Its subcellular location is the cytoplasm. The protein localises to the preautophagosomal structure membrane. It catalyses the reaction L-seryl-[protein] + ATP = O-phospho-L-seryl-[protein] + ADP + H(+). The catalysed reaction is L-threonyl-[protein] + ATP = O-phospho-L-threonyl-[protein] + ADP + H(+). Its function is as follows. Serine/threonine protein kinase involved in the cytoplasm to vacuole transport (Cvt) and found to be essential in autophagy, where it is required for the formation of autophagosomes. Involved in the clearance of protein aggregates which cannot be efficiently cleared by the proteasome. Required for selective autophagic degradation of the nucleus (nucleophagy) as well as for mitophagy which contributes to regulate mitochondrial quantity and quality by eliminating the mitochondria to a basal level to fulfill cellular energy requirements and preventing excess ROS production. Also involved in endoplasmic reticulum-specific autophagic process, in selective removal of ER-associated degradation (ERAD) substrates. Plays a key role in ATG9 and ATG23 cycling through the pre-autophagosomal structure and is necessary to promote ATG18 binding to ATG9 through phosphorylation of ATG9. Catalyzes phosphorylation of ATG4, decreasing the interaction between ATG4 and ATG8 and impairing deconjugation of PE-conjugated forms of ATG8. This is Serine/threonine-protein kinase ATG1 from Chaetomium globosum (strain ATCC 6205 / CBS 148.51 / DSM 1962 / NBRC 6347 / NRRL 1970) (Soil fungus).